The chain runs to 388 residues: Probable fatty acid desaturase DES1 (388 aa).

Residues 1–33 (MATTPMTVVDHEAEEAVAKAREDDKSRQVDAFD) are disordered. A compositionally biased stretch (basic and acidic residues) spans 9–30 (VDHEAEEAVAKAREDDKSRQVD). 2 consecutive transmembrane segments (helical) span residues 62–82 (LWYVVRDVAAVVALGTAAAAM) and 85–105 (WAVWPVYWAVQGTMFWAFFVL). The short motif at 107-111 (HDCGH) is the Histidine box-1 element. Residues 119-139 (TLNSVVGHLLHSFILIPYHGW) form a helical membrane-spanning segment. The short motif at 143–147 (HRTHH) is the Histidine box-2 element. 3 consecutive transmembrane segments (helical) span residues 177 to 194 (IRFTAPYPLLLFPLYLFY), 226 to 246 (WCIMLASLLAMSCAFGPLQVL), and 248 to 268 (MYGLPYLVFVMWLDLVTYLHH). A Histidine box-3 motif is present at residues 310 to 314 (HVIHH).

Belongs to the fatty acid desaturase type 1 family. In terms of tissue distribution, highly expressed in root hair cells. Barely detected in panicle, shoot apex, stems and leaves.

The protein localises to the membrane. It functions in the pathway lipid metabolism; polyunsaturated fatty acid biosynthesis. The polypeptide is Probable fatty acid desaturase DES1 (Sorghum bicolor (Sorghum)).